The sequence spans 260 residues: Thrombin-like enzyme acutobin (260 aa).

Positions 1–18 (MVLIRVLANLLILQLSYA) are cleaved as a signal peptide. Residues 19 to 24 (QKSSEL) constitute a propeptide that is removed on maturation. In terms of domain architecture, Peptidase S1 spans 25 to 251 (VIGGVECDIN…YNDWIRSITA (227 aa)). 6 cysteine pairs are disulfide-bonded: Cys31–Cys165, Cys52–Cys68, Cys102–Cys258, Cys144–Cys212, Cys176–Cys191, and Cys202–Cys227. His67 acts as the Charge relay system in catalysis. 2 N-linked (GlcNAc...) asparagine glycosylation sites follow: Asn101 and Asn105. The active-site Charge relay system is the Asp112. N-linked (GlcNAc...) asparagine glycosylation occurs at Asn124. Residue Ser206 is the Charge relay system of the active site. N-linked (GlcNAc...) asparagine glycosylation occurs at Asn253.

It belongs to the peptidase S1 family. Snake venom subfamily. As to quaternary structure, monomer. N-glycosylated. As to expression, expressed by the venom gland.

It is found in the secreted. Its function is as follows. Thrombin-like snake venom serine protease that coagulates human fibrinogen by hydrolysis of the alpha chains (FGA). This chain is Thrombin-like enzyme acutobin, found in Deinagkistrodon acutus (Hundred-pace snake).